A 338-amino-acid polypeptide reads, in one-letter code: LIX1-like protein (338 aa).

The interval 1 to 65 (METMRAQRLQ…LLLAGAPGLP (65 aa)) is disordered. The segment covering 29–38 (TGAPTSAATP) has biased composition (low complexity). Over residues 39–56 (PAGPPPAPPPPAPPPPPL) the composition is skewed to pro residues.

It belongs to the LIX1 family.

The polypeptide is LIX1-like protein (Lix1l) (Rattus norvegicus (Rat)).